The following is a 363-amino-acid chain: Outer membrane porin F (363 aa).

The N-terminal stretch at 1–22 (MMKRKILAAVIPALLAAATANA) is a signal peptide. A beta stranded membrane pass occupies residues 23–28 (AEIYNK). Position 29 (D29) is a topological domain, periplasmic. The chain crosses the membrane as a beta stranded span at residues 30 to 45 (GNKLDLYGKAVGRHVW). Residues 46–56 (TTTGDSKNADQ) are Extracellular-facing. A beta stranded transmembrane segment spans residues 57-69 (TYAQIGFKGETQI). Residues 70-71 (NT) lie on the Periplasmic side of the membrane. The chain crosses the membrane as a beta stranded span at residues 72 to 84 (DLTGFGQWEYRTK). At 85-99 (ADRAEGEQQNSNLVR) the chain is on the extracellular side. A beta stranded transmembrane segment spans residues 100 to 108 (LAFAGLKYA). Residue E109 is a topological domain, periplasmic. A beta stranded membrane pass occupies residues 110–117 (VGSIDYGR). Residues 118–154 (NYGIVYDVESYTDMAPYFSGETWGGAYTDNYMTSRAG) lie on the Extracellular side of the membrane. A beta stranded membrane pass occupies residues 155 to 161 (GLLTYRN). Residues 162 to 169 (SDFFGLVD) are Periplasmic-facing. The beta stranded transmembrane segment at 170–181 (GLSFGIQYQGKN) threads the bilayer. The Extracellular segment spans residues 182–192 (QDNHSINSQNG). Residues 193–203 (DGVGYTMAYEF) traverse the membrane as a beta stranded segment. Residue D204 is a topological domain, periplasmic. Residues 205–217 (GFGVTAAYSNSKR) form a beta stranded membrane-spanning segment. Topologically, residues 218–230 (TNDQQDRDGNGDR) are extracellular. Residues 231–242 (AESWAVGAKYDA) form a beta stranded membrane-spanning segment. Residue N243 is a topological domain, periplasmic. The chain crosses the membrane as a beta stranded span at residues 244–256 (NVYLAAVYAETRN). The Extracellular segment spans residues 257–272 (MSIVENTVTDTVEMAN). The chain crosses the membrane as a beta stranded span at residues 273 to 285 (KTQNLEVVAQYQF). Residues 286–287 (DF) are Periplasmic-facing. The chain crosses the membrane as a beta stranded span at residues 288–301 (GLRPAISYVQSKGK). Topologically, residues 302 to 312 (QLNGADGSADL) are extracellular. The chain crosses the membrane as a beta stranded span at residues 313–324 (AKYIQAGATYYF). Residues 325–326 (NK) are Periplasmic-facing. A beta stranded transmembrane segment spans residues 327-336 (NMNVWVDYRF). Over 337–353 (NLLDENDYSSSYVGTDD) the chain is Extracellular. Residues 354-363 (QAAVGITYQF) traverse the membrane as a beta stranded segment.

Belongs to the Gram-negative porin family. As to quaternary structure, homotrimer. Forms mixed heterotrimers with OmpC and with PhoE; other mixed heterotrimers with other porins are also probable.

The protein resides in the cell outer membrane. In terms of biological role, forms pores that allow passive diffusion of small molecules across the outer membrane. This is Outer membrane porin F (ompF) from Salmonella typhi.